Reading from the N-terminus, the 1003-residue chain is Phosphoenolpyruvate carboxylase (1003 aa).

A disordered region spans residues 1–24; it reads MIMTVSDPGGSSMSSSSAITPESE. Catalysis depends on residues H190 and K646.

Belongs to the PEPCase type 1 family. Requires Mg(2+) as cofactor.

The catalysed reaction is oxaloacetate + phosphate = phosphoenolpyruvate + hydrogencarbonate. Functionally, forms oxaloacetate, a four-carbon dicarboxylic acid source for the tricarboxylic acid cycle. This is Phosphoenolpyruvate carboxylase from Synechococcus sp. (strain WH7803).